The sequence spans 174 residues: ATP synthase subunit b 2 (174 aa).

The helical transmembrane segment at 27-47 threads the bilayer; that stretch reads IFWLIITLVAIYLILTKVALP.

Belongs to the ATPase B chain family. In terms of assembly, F-type ATPases have 2 components, F(1) - the catalytic core - and F(0) - the membrane proton channel. F(1) has five subunits: alpha(3), beta(3), gamma(1), delta(1), epsilon(1). F(0) has three main subunits: a(1), b(2) and c(10-14). The alpha and beta chains form an alternating ring which encloses part of the gamma chain. F(1) is attached to F(0) by a central stalk formed by the gamma and epsilon chains, while a peripheral stalk is formed by the delta and b chains.

The protein localises to the cell inner membrane. Functionally, f(1)F(0) ATP synthase produces ATP from ADP in the presence of a proton or sodium gradient. F-type ATPases consist of two structural domains, F(1) containing the extramembraneous catalytic core and F(0) containing the membrane proton channel, linked together by a central stalk and a peripheral stalk. During catalysis, ATP synthesis in the catalytic domain of F(1) is coupled via a rotary mechanism of the central stalk subunits to proton translocation. Its function is as follows. Component of the F(0) channel, it forms part of the peripheral stalk, linking F(1) to F(0). The b'-subunit is a diverged and duplicated form of b found in plants and photosynthetic bacteria. The polypeptide is ATP synthase subunit b 2 (atpF2) (Dinoroseobacter shibae (strain DSM 16493 / NCIMB 14021 / DFL 12)).